A 428-amino-acid chain; its full sequence is Chaperone SurA (428 aa).

Positions 1 to 19 are cleaved as a signal peptide; the sequence is MNIWKTLLLGMLVTGSAVS. 2 consecutive PpiC domains span residues 170-268 and 277-377; these read SVEY…KIED and VTEV…EVLD.

It is found in the periplasm. It carries out the reaction [protein]-peptidylproline (omega=180) = [protein]-peptidylproline (omega=0). Chaperone involved in the correct folding and assembly of outer membrane proteins. Recognizes specific patterns of aromatic residues and the orientation of their side chains, which are found more frequently in integral outer membrane proteins. May act in both early periplasmic and late outer membrane-associated steps of protein maturation. The polypeptide is Chaperone SurA (Vibrio vulnificus (strain CMCP6)).